A 188-amino-acid polypeptide reads, in one-letter code: MSIKSDKWIRRMSEEFGMIDPFEPNQIKEADGQRIISYGTSSYGYDIRCANEFKIFTNINSTIVDPKNFDPKNFVTVEDDCCIIPPNSFALARTVEYFRIPRNVLTVCLGKSTYARCGIIVNVTPFEPEWEGYVTLEFSNTTPLPAKIYAGEGVAQVLFFESDEVCETSYKDRNGKYMGQTGVTLPKA.

DCTP-binding positions include 111-116, 135-137, Q156, Y170, and Q180; these read KSTYAR and TLE. The active-site Proton donor/acceptor is E137.

Belongs to the dCTP deaminase family. In terms of assembly, homotrimer.

The enzyme catalyses dCTP + H2O + H(+) = dUTP + NH4(+). It participates in pyrimidine metabolism; dUMP biosynthesis; dUMP from dCTP (dUTP route): step 1/2. In terms of biological role, catalyzes the deamination of dCTP to dUTP. This Neisseria gonorrhoeae (strain ATCC 700825 / FA 1090) protein is dCTP deaminase.